A 503-amino-acid chain; its full sequence is MNYQLHELFKAVGIHRQIVGKDLIIDSISCDSRHISKGGLFFGLPGEKVDGGIFWRKALASGAVAAVIGEEAAQKDPPSNEDMVFVVSDPVAHWMGEMASVFWKRPSSQIDLIGVTGTNGKTTTTYLIEHLCKQSGITSALFGTLYNRWPKHSEVAIHTTAFGDVLQSQLAQAVAAGARLGVMEISSHALDQRRVAGCSFSGAVFTNLTQDHLDYHESMEAYFQSKALLFQAPLLRDKESCSVVNIDDPWGLRLSKQLNKSCWRASLEKRVIDSIQPELFLTDLNITNKGIEGVLHSPFGQGPFVSSLIGRFNLMNMLEAVGILIQHGVSLQELLPSIKSFSGVPGRMEQIKVEGDLPVVLVDYAHTPDGLKNALIALRSFGSGRLFCVFGCGGDRDRSKRPLMGAIASKFADHVTLTSDNPRTEDPQQILNDVLPGIATETELIIEIDRANAIQMAIMKALPGDIVLIAGKGHENYQILGLETIEFDDREIAKKILHLKLNP.

Residue Ser-32 coordinates UDP-N-acetyl-alpha-D-muramoyl-L-alanyl-D-glutamate. 117–123 (GTNGKTT) serves as a coordination point for ATP. UDP-N-acetyl-alpha-D-muramoyl-L-alanyl-D-glutamate contacts are provided by residues 159–160 (TT), Ser-186, Gln-192, and Arg-194. Lys-226 carries the post-translational modification N6-carboxylysine. Residues Arg-396, 420–423 (DNPR), Gly-471, and Glu-475 contribute to the meso-2,6-diaminopimelate site. The Meso-diaminopimelate recognition motif signature appears at 420-423 (DNPR).

This sequence belongs to the MurCDEF family. MurE subfamily. It depends on Mg(2+) as a cofactor. Post-translationally, carboxylation is probably crucial for Mg(2+) binding and, consequently, for the gamma-phosphate positioning of ATP.

The protein localises to the cytoplasm. The catalysed reaction is UDP-N-acetyl-alpha-D-muramoyl-L-alanyl-D-glutamate + meso-2,6-diaminopimelate + ATP = UDP-N-acetyl-alpha-D-muramoyl-L-alanyl-gamma-D-glutamyl-meso-2,6-diaminopimelate + ADP + phosphate + H(+). Its pathway is cell wall biogenesis; peptidoglycan biosynthesis. In terms of biological role, catalyzes the addition of meso-diaminopimelic acid to the nucleotide precursor UDP-N-acetylmuramoyl-L-alanyl-D-glutamate (UMAG) in the biosynthesis of bacterial cell-wall peptidoglycan. This is UDP-N-acetylmuramoyl-L-alanyl-D-glutamate--2,6-diaminopimelate ligase from Prochlorococcus marinus (strain SARG / CCMP1375 / SS120).